The following is a 160-amino-acid chain: Keratin-associated protein 9-6 (160 aa).

16 consecutive repeat copies span residues 4 to 8 (CCSPG), 13 to 17 (CCRTT), 18 to 22 (CCRTT), 37 to 41 (CCQPS), 42 to 46 (CCVSS), 47 to 51 (CCQPY), 56 to 60 (CCQNT), 61 to 65 (CCRTT), 66 to 70 (CCQPT), 75 to 79 (CCQPS), 80 to 84 (CCSTP), 90 to 94 (CCGSS), 95 to 99 (CCGQT), 140 to 144 (CCQPC), 149 to 153 (CCVSS), and 154 to 158 (CCQHS). The interval 4-158 (CCSPGCQPTC…CCVSSCCQHS (155 aa)) is 16 X 5 AA repeats of C-C-[GSVRQ]-[QTSPHN]-[TPSGYC].

This sequence belongs to the KRTAP type 9 family. In terms of assembly, interacts with hair keratins.

Functionally, in the hair cortex, hair keratin intermediate filaments are embedded in an interfilamentous matrix, consisting of hair keratin-associated proteins (KRTAP), which are essential for the formation of a rigid and resistant hair shaft through their extensive disulfide bond cross-linking with abundant cysteine residues of hair keratins. The matrix proteins include the high-sulfur and high-glycine-tyrosine keratins. This Homo sapiens (Human) protein is Keratin-associated protein 9-6.